The sequence spans 179 residues: Inner membrane-spanning protein YciB (179 aa).

5 helical membrane-spanning segments follow: residues 22-42 (IYAATAALIVATAIVLIYSWV), 50-70 (MALITFVLVVVFGGLTLFFHN), 76-96 (WKVTVIYALFAGALLVSQWVM), 121-141 (LAWAVFFILCGLANIYIAFWL), and 149-169 (FKVFGLTALTLIFTLLSGIYI).

It belongs to the YciB family.

The protein resides in the cell inner membrane. In terms of biological role, plays a role in cell envelope biogenesis, maintenance of cell envelope integrity and membrane homeostasis. The sequence is that of Inner membrane-spanning protein YciB from Shigella boydii serotype 4 (strain Sb227).